Here is a 706-residue protein sequence, read N- to C-terminus: Methionine--tRNA ligase (706 aa).

A 'HIGH' region motif is present at residues 13–23; that stretch reads PYANGSIHLGH. Zn(2+)-binding residues include C144, C147, C157, and C160. The short motif at 336–340 is the 'KMSKS' region element; it reads KMSKS. Residue K339 participates in ATP binding. The interval 570 to 593 is disordered; it reads QQTMNTETESHSPQRHGQAQQHPV. Residues 604 to 706 form the tRNA-binding domain; that stretch reads DFVKIDLRIA…SGAQPGMRVK (103 aa).

The protein belongs to the class-I aminoacyl-tRNA synthetase family. MetG type 1 subfamily. In terms of assembly, homodimer. Zn(2+) serves as cofactor.

The protein resides in the cytoplasm. It catalyses the reaction tRNA(Met) + L-methionine + ATP = L-methionyl-tRNA(Met) + AMP + diphosphate. Is required not only for elongation of protein synthesis but also for the initiation of all mRNA translation through initiator tRNA(fMet) aminoacylation. This Nitrosomonas europaea (strain ATCC 19718 / CIP 103999 / KCTC 2705 / NBRC 14298) protein is Methionine--tRNA ligase.